A 230-amino-acid chain; its full sequence is Orotidine 5'-phosphate decarboxylase (230 aa).

Substrate-binding positions include aspartate 16, lysine 38, 65–74, threonine 119, arginine 180, glutamine 189, glycine 209, and arginine 210; that span reads DLKLHDIGNT. The active-site Proton donor is lysine 67.

It belongs to the OMP decarboxylase family. Type 1 subfamily. Homodimer.

It catalyses the reaction orotidine 5'-phosphate + H(+) = UMP + CO2. It functions in the pathway pyrimidine metabolism; UMP biosynthesis via de novo pathway; UMP from orotate: step 2/2. Functionally, catalyzes the decarboxylation of orotidine 5'-monophosphate (OMP) to uridine 5'-monophosphate (UMP). The protein is Orotidine 5'-phosphate decarboxylase of Methylobacterium radiotolerans (strain ATCC 27329 / DSM 1819 / JCM 2831 / NBRC 15690 / NCIMB 10815 / 0-1).